Reading from the N-terminus, the 74-residue chain is U3-agatoxin-Ao1g (74 aa).

The first 20 residues, 1–20, serve as a signal peptide directing secretion; the sequence is MRAIISLLLISTMVFGVIEA. Positions 21–34 are excised as a propeptide; it reads VSVEEGLKIFEGER. 4 cysteine pairs are disulfide-bonded: cysteine 37–cysteine 53, cysteine 44–cysteine 58, cysteine 52–cysteine 68, and cysteine 60–cysteine 66. The residue at position 72 (asparagine 72) is an Asparagine amide.

This sequence belongs to the neurotoxin 07 (Beta/delta-agtx) family. 03 (aga-4) subfamily. Aga sub-subfamily. Expressed by the venom gland.

It is found in the secreted. Its function is as follows. Insecticidal neurotoxin that modulates the insect Nav channel (DmNaV1/tipE (para/tipE)) in a unique manner, with both the activation and inactivation processes being affected. The voltage dependence of activation is shifted toward more hyperpolarized potentials (analogous to site 4 toxins) and a non-inactivating persistent sodium current is induced (site 3-like action). Interestingly, both effects take place in a voltage-dependent manner, producing a bell-shaped curve between -80 and 0 mV. The sequence is that of U3-agatoxin-Ao1g from Agelena orientalis (Funnel-web spider).